We begin with the raw amino-acid sequence, 172 residues long: Stellate protein CG33239/CG33241 (172 aa).

Belongs to the casein kinase 2 subunit beta family. As to quaternary structure, interacts in vitro with the casein kinase 2 alpha subunit (CkII-alpha). The relevance of such interaction is however unclear in vivo. As to expression, probably not expressed in wild-type flies. In males lacking the Y chromosome, it is testis-specific and constitutes the main component of star-shaped crystals.

Unknown. In males lacking the Y chromosome, its strong overexpression leads to the appearance of proteinaceous star-shaped crystals in the primary spermatocytes causing meiotic drive, possibly by interfering with normal casein kinase 2 activity. The sequence is that of Stellate protein CG33239/CG33241 (Ste:CG33239) from Drosophila melanogaster (Fruit fly).